We begin with the raw amino-acid sequence, 656 residues long: Translation factor GUF1 homolog, mitochondrial (656 aa).

A mitochondrion-targeting transit peptide spans 1-29 (MLAVRRRGLRVLAVAPLRVRGLATTSTEF). The tr-type G domain maps to 54–238 (ERIRNFSIVA…AVVERLPPPV (185 aa)). Residues 63 to 70 (AHIDHGKS), 131 to 135 (DTPGH), and 185 to 188 (TKID) contribute to the GTP site.

Belongs to the TRAFAC class translation factor GTPase superfamily. Classic translation factor GTPase family. LepA subfamily.

The protein localises to the mitochondrion inner membrane. The enzyme catalyses GTP + H2O = GDP + phosphate + H(+). Functionally, promotes mitochondrial protein synthesis. May act as a fidelity factor of the translation reaction, by catalyzing a one-codon backward translocation of tRNAs on improperly translocated ribosomes. Binds to mitochondrial ribosomes in a GTP-dependent manner. This Phytophthora infestans (strain T30-4) (Potato late blight agent) protein is Translation factor GUF1 homolog, mitochondrial.